Here is a 301-residue protein sequence, read N- to C-terminus: Phosphate transport system permease protein PstA 2 (301 aa).

6 helical membrane-spanning segments follow: residues 36-56, 83-103, 127-147, 149-169, 209-229, and 274-294; these read ACVC…IGVV, IIGT…VSVL, LSGI…VVYF, WGFS…PYIA, GIVT…APLL, and ALLL…INWL. The ABC transmembrane type-1 domain occupies 83–288; it reads IIGTAVLAIG…VFLLLLIFIG (206 aa).

It belongs to the binding-protein-dependent transport system permease family. CysTW subfamily.

It is found in the cell membrane. Part of the binding-protein-dependent transport system for phosphate; probably responsible for the translocation of the substrate across the membrane. The polypeptide is Phosphate transport system permease protein PstA 2 (pstA2) (Mycobacterium bovis (strain ATCC BAA-935 / AF2122/97)).